Consider the following 331-residue polypeptide: 6-phosphogluconolactonase (331 aa).

Lys-287 bears the N6-acetyllysine mark.

This sequence belongs to the cycloisomerase 2 family.

It carries out the reaction 6-phospho-D-glucono-1,5-lactone + H2O = 6-phospho-D-gluconate + H(+). It participates in carbohydrate degradation; pentose phosphate pathway; D-ribulose 5-phosphate from D-glucose 6-phosphate (oxidative stage): step 2/3. Its function is as follows. Catalyzes the hydrolysis of 6-phosphogluconolactone to 6-phosphogluconate. The chain is 6-phosphogluconolactonase from Escherichia fergusonii (strain ATCC 35469 / DSM 13698 / CCUG 18766 / IAM 14443 / JCM 21226 / LMG 7866 / NBRC 102419 / NCTC 12128 / CDC 0568-73).